Consider the following 303-residue polypeptide: L(+)-tartrate dehydratase subunit alpha (303 aa).

C71, C190, and C277 together coordinate iron-sulfur cluster.

It belongs to the class-I fumarase family. As to quaternary structure, tetramer of two alpha and two beta subunits. It depends on iron-sulfur cluster as a cofactor.

The enzyme catalyses (2R,3R)-tartrate = oxaloacetate + H2O. In Escherichia coli O6:K15:H31 (strain 536 / UPEC), this protein is L(+)-tartrate dehydratase subunit alpha (ttdA).